The sequence spans 225 residues: MGIKDWPDGEGPREKLLKLGVGPLSDAELLAVVLRNGVQGLSAVELARNLIGQFGGLRELLTASEIEVCRMPGMGPVKFAQLQAAAELSKRISQQNLKRGKILSDPDLTRDYLMRQLADRAYEVFAILLLDSQHRVIQFVELFRGTIDSASVYPRDVVCLVLEKKAAAVIVCHNHPSGVAEPSLADRRITERLKFALETIDVSLLDHMVVGDREIVSFAERGWID.

The MPN domain maps to 102-224 (ILSDPDLTRD…IVSFAERGWI (123 aa)). H173, H175, and D186 together coordinate Zn(2+). The JAMM motif signature appears at 173–186 (HNHPSGVAEPSLAD).

It belongs to the UPF0758 family.

This is UPF0758 protein Ssed_0385 from Shewanella sediminis (strain HAW-EB3).